The sequence spans 505 residues: RNA-binding region-containing protein 3 (505 aa).

In terms of domain architecture, RRM 1 spans Lys15–Asp90. Disordered stretches follow at residues Ile96 to Val123, Pro193 to Arg236, Ala354 to Ile374, and Ala486 to His505. Positions Pro193–Leu214 are enriched in pro residues. Acidic residues-rich tracts occupy residues Gly221–Glu235 and Glu361–Pro370. The 84-residue stretch at Cys405 to Ser488 folds into the RRM 2 domain. The segment covering Pro491–His505 has biased composition (basic and acidic residues).

Component of the U11/U12 snRNPs that are part of the U12-type spliceosome.

It localises to the nucleus. Functionally, participates in pre-mRNA U12-dependent splicing, performed by the minor spliceosome which removes U12-type introns. U12-type introns comprise less than 1% of all non-coding sequences. This chain is RNA-binding region-containing protein 3, found in Danio rerio (Zebrafish).